A 750-amino-acid polypeptide reads, in one-letter code: Photosystem I P700 chlorophyll a apoprotein A1 (750 aa).

The next 8 helical transmembrane spans lie at 70 to 93 (VFSA…FHGA), 156 to 179 (LYCT…FHYH), 195 to 219 (LNHH…HVSL), 291 to 309 (IAHH…GHMY), 346 to 369 (WHAQ…HHMY), 385 to 411 (LSLF…IFMV), 433 to 455 (AIIS…LYIH), and 531 to 549 (FLVH…LILL). Residues C573 and C582 each coordinate [4Fe-4S] cluster. 2 helical membrane passes run 589 to 610 (HVFL…HFSW) and 664 to 686 (LSAY…MFLF). H675 lines the chlorophyll a' pocket. Residues M683 and Y691 each contribute to the chlorophyll a site. W692 lines the phylloquinone pocket. A helical membrane pass occupies residues 724–744 (AVGVTHYLLGGIATTWAFFLA).

Belongs to the PsaA/PsaB family. As to quaternary structure, the PsaA/B heterodimer binds the P700 chlorophyll special pair and subsequent electron acceptors. PSI consists of a core antenna complex that captures photons, and an electron transfer chain that converts photonic excitation into a charge separation. The eukaryotic PSI reaction center is composed of at least 11 subunits. It depends on P700 is a chlorophyll a/chlorophyll a' dimer, A0 is one or more chlorophyll a, A1 is one or both phylloquinones and FX is a shared 4Fe-4S iron-sulfur center. as a cofactor.

The protein resides in the plastid. The protein localises to the chloroplast thylakoid membrane. It carries out the reaction reduced [plastocyanin] + hnu + oxidized [2Fe-2S]-[ferredoxin] = oxidized [plastocyanin] + reduced [2Fe-2S]-[ferredoxin]. Functionally, psaA and PsaB bind P700, the primary electron donor of photosystem I (PSI), as well as the electron acceptors A0, A1 and FX. PSI is a plastocyanin-ferredoxin oxidoreductase, converting photonic excitation into a charge separation, which transfers an electron from the donor P700 chlorophyll pair to the spectroscopically characterized acceptors A0, A1, FX, FA and FB in turn. Oxidized P700 is reduced on the lumenal side of the thylakoid membrane by plastocyanin. The polypeptide is Photosystem I P700 chlorophyll a apoprotein A1 (Hordeum vulgare (Barley)).